The chain runs to 412 residues: MKIYLVGGAVRDALLGLPVKDRDWVVVGSTPQEMLDAGYHQVGRDFPVFLHPQTHEEYALARTERKSGSGYTGFTCYAAPDVTLEDDLKRRDLTINALAQDDNGEIIDPYNGLGDLQNRLLRHVSPAFGEDPLRVLRVARFAARYAHLVFRIADETLTLMREMTHAGELEHLTPERVWKETESALTTRNPQVFFQVLRDCGALRVLFPEIDALFGVPAPAKWHPEIDTGIHTLMTLSMAAMLSPQVDVRFATLCHDLGKGLTPPELWPRHHGHGPAGVKLVEQLCQRLRVPNEIRDLARLVAEFHDLIHTFPMLNPKTIVKLFDSIDAWRKPQRVEQLALTSEADVRGRTGFESADYPQGRWLREAWEVAQSVPTKAVVEAGFKGVEIREELTRRRIAAVASWKEQRCPKPE.

2 residues coordinate ATP: glycine 8 and arginine 11. Residues glycine 8 and arginine 11 each contribute to the CTP site. Mg(2+) contacts are provided by aspartate 21 and aspartate 23. ATP contacts are provided by arginine 91, arginine 137, and arginine 140. Residues arginine 91, arginine 137, and arginine 140 each contribute to the CTP site. An HD domain is found at 228 to 329 (TGIHTLMTLS…VKLFDSIDAW (102 aa)).

This sequence belongs to the tRNA nucleotidyltransferase/poly(A) polymerase family. Bacterial CCA-adding enzyme type 1 subfamily. In terms of assembly, monomer. Can also form homodimers and oligomers. The cofactor is Mg(2+). Ni(2+) serves as cofactor.

The catalysed reaction is a tRNA precursor + 2 CTP + ATP = a tRNA with a 3' CCA end + 3 diphosphate. It catalyses the reaction a tRNA with a 3' CCA end + 2 CTP + ATP = a tRNA with a 3' CCACCA end + 3 diphosphate. Its function is as follows. Catalyzes the addition and repair of the essential 3'-terminal CCA sequence in tRNAs without using a nucleic acid template. Adds these three nucleotides in the order of C, C, and A to the tRNA nucleotide-73, using CTP and ATP as substrates and producing inorganic pyrophosphate. tRNA 3'-terminal CCA addition is required both for tRNA processing and repair. Also involved in tRNA surveillance by mediating tandem CCA addition to generate a CCACCA at the 3' terminus of unstable tRNAs. While stable tRNAs receive only 3'-terminal CCA, unstable tRNAs are marked with CCACCA and rapidly degraded. The protein is Multifunctional CCA protein of Shigella dysenteriae serotype 1 (strain Sd197).